The chain runs to 287 residues: MLYLVGLGLSDETDITVKGLEVVKKASRVYLEAYTSILLVEQSVLESYYGRSITVADREMVESNSEEILRNAQNEDVAFLVVGDPFGATTHTDLVLRARELEIPVRTVPNASIMSGIGACGLQLYNFGQTVSMVFFTDTWKPASFYDRIKENRQIGLHTLVLVDIKVKEQSLENMARGRLVYEPPRYMTVGQCAQQMLEIEEERKEGVYAKDSLAIGAARVGGRTEKFVAGTLEELCSTDEELGPPLHSLVLLGRRTHELELDYVRQFAVDKEKWDKIWNAEYGKQL.

Residues Leu-9, Asp-84, Gly-87, 112–113 (SI), Val-163, Val-221, and His-248 each bind S-adenosyl-L-methionine.

It belongs to the diphthine synthase family.

It localises to the cytoplasm. It catalyses the reaction 2-[(3S)-amino-3-carboxypropyl]-L-histidyl-[translation elongation factor 2] + 4 S-adenosyl-L-methionine = diphthine methyl ester-[translation elongation factor 2] + 4 S-adenosyl-L-homocysteine + 3 H(+). It participates in protein modification; peptidyl-diphthamide biosynthesis. S-adenosyl-L-methionine-dependent methyltransferase that catalyzes four methylations of the modified target histidine residue in translation elongation factor 2 (EF-2), to form an intermediate called diphthine methyl ester. The four successive methylation reactions represent the second step of diphthamide biosynthesis. The protein is Diphthine methyl ester synthase (DPH5) of Gibberella zeae (strain ATCC MYA-4620 / CBS 123657 / FGSC 9075 / NRRL 31084 / PH-1) (Wheat head blight fungus).